We begin with the raw amino-acid sequence, 451 residues long: MKVIRDSIHKDIYLDEKELEIIDSEEFQRLRNIKQTGLTYLVYPSANHTRFEHSLGTMFIASKIAEKINADVELTRVSALLHDIGHPPFSHTLEICGYSHEVFGRKKIKHMNLDNFSKSEIIKTLNRKNLEGKIISGDVDADRMDYLLRDSYHTGTAYGMIDLPRILRSITTFESFGKVKIGILKKGIQAIESLLVARHQMYSAVYMHPTVRIADTMIKRAVIKEIQEKNLDIKDLANMDDIALVSFLRISENYLMERIDRRNLYKNLITYSYFDLNPIEKWIFVNLDEKQILSLESRFYEEFGWDIFIDIYPIPKMEEHNVYIISDEGVKRLDEVSPLAQSLKPSEMRLWNISIYAPKEKIKELRENNVKDRINKILKELDVKVESKLIDILKEYGTITGKRRFLEIAKERGISPKEFYNELHKLIFCGLIKERFNRRTYVYCLNNFVKL.

Residues 50–147 form the HD domain; it reads RFEHSLGTMF…DVDADRMDYL (98 aa).

This is an uncharacterized protein from Methanocaldococcus jannaschii (strain ATCC 43067 / DSM 2661 / JAL-1 / JCM 10045 / NBRC 100440) (Methanococcus jannaschii).